Reading from the N-terminus, the 175-residue chain is Short chain dehydrogenase/reductase dpmpG (175 aa).

The NADP(+) site is built by isoleucine 18, aspartate 71, asparagine 98, and lysine 132.

The protein belongs to the short-chain dehydrogenases/reductases (SDR) family.

It functions in the pathway secondary metabolite biosynthesis; terpenoid biosynthesis. Short chain dehydrogenase/reductase; part of the gene cluster that mediates the biosynthesis of diterpenoid pyrones. The first step of the pathway is the synthesis of the alpha-pyrone moiety by the polyketide synthase dpmpA via condensation of one acetyl-CoA starter unit with 3 malonyl-CoA units and 2 methylations. The alpha-pyrone is then combined with geranylgeranyl pyrophosphate (GGPP) formed by the GGPP synthase dpmpD through the action of the prenyltransferase dpmpC to yield a linear alpha-pyrone diterpenoid. Subsequent steps in the diterpenoid pyrone biosynthetic pathway involve the decalin core formation, which is initiated by the epoxidation of the C10-C11 olefin by the FAD-dependent oxidoreductase dpmpE, and is followed by a cyclization cascade catalyzed by the terpene cyclase dpmpB. The short chain dehydrogenase/reductase dpmpG then oxidizes the 8S hydroxy group to a ketone and the short chain dehydrogenase/reductase dpmpH reduces the ketone to the 8R hydroxy group to yield higginsianin B. Higginsianin B is further methylated by the methyltransferase dpmpI to produce the intermediate named FDDP B. The cytochrome P450 monooxygenase dpmpJ then oxidizes the C-26 methyl to primary alcohol, producing the final diterpenoid pyrone with a C-26 primary alcohol on the gamma-pyrone moiety named FDDP C. The protein is Short chain dehydrogenase/reductase dpmpG of Macrophomina phaseolina (strain MS6) (Charcoal rot fungus).